A 406-amino-acid chain; its full sequence is Na(+)/H(+) antiporter NhaA (406 aa).

12 consecutive transmembrane segments (helical) span residues 29-49 (FAGI…NNIF), 75-95 (FIEL…GLEM), 111-131 (ILPA…YMFF), 141-161 (GWAI…SFFS), 170-190 (AFII…LALF), 195-215 (INTP…ILNY), 220-240 (QLFY…ESGI), 242-262 (GTLC…GEFN), 278-298 (YFIL…YFAF), 306-326 (ILAL…LGIM), 349-369 (FYSI…IGSI), and 382-402 (AAVI…LKYC).

The protein belongs to the NhaA Na(+)/H(+) (TC 2.A.33) antiporter family.

It is found in the cell inner membrane. It catalyses the reaction Na(+)(in) + 2 H(+)(out) = Na(+)(out) + 2 H(+)(in). In terms of biological role, na(+)/H(+) antiporter that extrudes sodium in exchange for external protons. This chain is Na(+)/H(+) antiporter NhaA, found in Rickettsia massiliae (strain Mtu5).